We begin with the raw amino-acid sequence, 126 residues long: Copper resistance protein C (126 aa).

The N-terminal stretch at 1–24 is a signal peptide; that stretch reads MLLNRTSFVTLFAAGMLVSALAQA. A Cu(2+)-binding site is contributed by histidine 25. Cu(+) is bound by residues methionine 64, methionine 67, methionine 70, histidine 72, and methionine 75. Cu(2+) is bound at residue histidine 115.

It belongs to the CopC family. In terms of assembly, monomer.

The protein localises to the periplasm. The redox state of copper bound to CopC may act as a switch between the possible trafficking pathways of the metal ion. Functionally, copper-binding protein involved in copper resistance and homeostasis. Probably mediates copper resistance by sequestering the excess of copper in the periplasm. May act as a copper carrier in the oxidizing periplasmic space that exchanges either Cu(I) or Cu(II) with its putative partners CopA, CopB and CopD. The polypeptide is Copper resistance protein C (Pseudomonas syringae pv. tomato).